We begin with the raw amino-acid sequence, 383 residues long: Non-structural maintenance of chromosomes element 4 homolog B (383 aa).

Basic and acidic residues predominate over residues 1-22 (MRNSVKWETELTGDRSRRREAD). Disordered stretches follow at residues 1-59 (MRNS…EQGI), 198-231 (MKQRKSRVGNRKRTKPGAGVKPEEVDDTEAEKKS), and 355-383 (QGSVIQEETVVEDSSNMEGDNEDSKNGGL). Basic residues predominate over residues 201-212 (RKSRVGNRKRTK). The segment covering 355 to 372 (QGSVIQEETVVEDSSNME) has biased composition (polar residues).

The protein belongs to the NSE4 family. Interacts with SMC5, SMC6A or SMC6B. The SMC5-SMC6 complex is composed of the SMC5 and SMC6 heterodimer attached via their hinge domain and from the non-SMC subunit NSE4A or NSE4B. As to expression, not expressed in seedlings, rosette leaves and floral buds.

The protein localises to the nucleus. Component of the SMC5-SMC6 complex, that promotes sister chromatid alignment after DNA damage and facilitates double-stranded DNA breaks (DSBs) repair via homologous recombination between sister chromatids. The protein is Non-structural maintenance of chromosomes element 4 homolog B (NSE4B) of Arabidopsis thaliana (Mouse-ear cress).